Reading from the N-terminus, the 129-residue chain is Fluoride-specific ion channel FluC (129 aa).

The next 4 membrane-spanning stretches (helical) occupy residues phenylalanine 8 to alanine 28, alanine 36 to leucine 56, phenylalanine 71 to valine 91, and alanine 103 to leucine 123. Residues glycine 78 and threonine 81 each coordinate Na(+).

Belongs to the fluoride channel Fluc/FEX (TC 1.A.43) family.

Its subcellular location is the cell inner membrane. It catalyses the reaction fluoride(in) = fluoride(out). Na(+) is not transported, but it plays an essential structural role and its presence is essential for fluoride channel function. In terms of biological role, fluoride-specific ion channel. Important for reducing fluoride concentration in the cell, thus reducing its toxicity. The protein is Fluoride-specific ion channel FluC of Idiomarina loihiensis (strain ATCC BAA-735 / DSM 15497 / L2-TR).